A 496-amino-acid chain; its full sequence is MKKYVLAFDQGTTSCRAILFDKDGKKIETAQQEFSQIFPKQGWVEHDAMEIWGKQSGVAREVLERSGVSTQEIAAIGITNQRETTVVWNKNTGRPVCNAIVWQCRRTADICDALKEKGLSDSIRKKTGLIIDAYFSGTKIKWILDNVPEARTLAEKGELLFGNIDTWLIWNLTRGKVHVTDYTNASRTLLFNIHTLQWDKELLKAMDIPESMLPEVKPSSYVYGYTEEHTFGGSKIPIAGAAGDQQAALFGQACFEEGSAKNTYGTGCFMLMNTGDKIIESENGLLTTIAFGIDNSVKYALEGSSFIAGAAVQWLRDELKLIYTAHETEYYAGLVNDTNGVYFVPAFSGLGAPYWDMYARGALLGLTRGAKREHIVRAVLEAIAYQTKDVLYAMEKDSKINLKSLKVDGGACANNFLMQFQSDILNVPVLRPYEKETTALGAAYLAGLAVGFWKEQGEIKRIQDIEREFRPDMEEEKRKTLYAGWKKAVERSMKWA.

Residue threonine 12 coordinates ADP. Residues threonine 12, threonine 13, and serine 14 each contribute to the ATP site. Threonine 12 is a sn-glycerol 3-phosphate binding site. Arginine 16 lines the ADP pocket. Residues arginine 82, glutamate 83, tyrosine 134, and aspartate 244 each contribute to the sn-glycerol 3-phosphate site. Positions 82, 83, 134, 244, and 245 each coordinate glycerol. ADP is bound by residues threonine 266 and glycine 309. Residues threonine 266, glycine 309, glutamine 313, and glycine 410 each coordinate ATP. Positions 410 and 414 each coordinate ADP.

This sequence belongs to the FGGY kinase family.

The enzyme catalyses glycerol + ATP = sn-glycerol 3-phosphate + ADP + H(+). It participates in polyol metabolism; glycerol degradation via glycerol kinase pathway; sn-glycerol 3-phosphate from glycerol: step 1/1. Its activity is regulated as follows. Inhibited by fructose 1,6-bisphosphate (FBP). Functionally, key enzyme in the regulation of glycerol uptake and metabolism. Catalyzes the phosphorylation of glycerol to yield sn-glycerol 3-phosphate. In Treponema denticola (strain ATCC 35405 / DSM 14222 / CIP 103919 / JCM 8153 / KCTC 15104), this protein is Glycerol kinase.